The chain runs to 89 residues: Small ribosomal subunit protein uS17 (89 aa).

The protein belongs to the universal ribosomal protein uS17 family. As to quaternary structure, part of the 30S ribosomal subunit.

In terms of biological role, one of the primary rRNA binding proteins, it binds specifically to the 5'-end of 16S ribosomal RNA. This Bacteroides fragilis (strain ATCC 25285 / DSM 2151 / CCUG 4856 / JCM 11019 / LMG 10263 / NCTC 9343 / Onslow / VPI 2553 / EN-2) protein is Small ribosomal subunit protein uS17.